The primary structure comprises 170 residues: Peptide deformylase (170 aa).

Fe cation contacts are provided by Cys88 and His130. Residue Glu131 is part of the active site. His134 provides a ligand contact to Fe cation.

The protein belongs to the polypeptide deformylase family. Requires Fe(2+) as cofactor.

The catalysed reaction is N-terminal N-formyl-L-methionyl-[peptide] + H2O = N-terminal L-methionyl-[peptide] + formate. Removes the formyl group from the N-terminal Met of newly synthesized proteins. Requires at least a dipeptide for an efficient rate of reaction. N-terminal L-methionine is a prerequisite for activity but the enzyme has broad specificity at other positions. This chain is Peptide deformylase, found in Acetivibrio thermocellus (strain ATCC 27405 / DSM 1237 / JCM 9322 / NBRC 103400 / NCIMB 10682 / NRRL B-4536 / VPI 7372) (Clostridium thermocellum).